A 406-amino-acid chain; its full sequence is 4-hydroxy-3-methylbut-2-en-1-yl diphosphate synthase (ferredoxin) (406 aa).

The [4Fe-4S] cluster site is built by Cys-315, Cys-318, Cys-349, and Glu-356.

The protein belongs to the IspG family. Requires [4Fe-4S] cluster as cofactor.

It catalyses the reaction (2E)-4-hydroxy-3-methylbut-2-enyl diphosphate + 2 oxidized [2Fe-2S]-[ferredoxin] + H2O = 2-C-methyl-D-erythritol 2,4-cyclic diphosphate + 2 reduced [2Fe-2S]-[ferredoxin] + H(+). The protein operates within isoprenoid biosynthesis; isopentenyl diphosphate biosynthesis via DXP pathway; isopentenyl diphosphate from 1-deoxy-D-xylulose 5-phosphate: step 5/6. Converts 2C-methyl-D-erythritol 2,4-cyclodiphosphate (ME-2,4cPP) into 1-hydroxy-2-methyl-2-(E)-butenyl 4-diphosphate. The protein is 4-hydroxy-3-methylbut-2-en-1-yl diphosphate synthase (ferredoxin) of Microcystis aeruginosa (strain NIES-843 / IAM M-2473).